The following is a 491-amino-acid chain: Ketol-acid reductoisomerase (NADP(+)) (491 aa).

Positions 15 to 208 (AQLGKCRFMG…GGHRAGVLES (194 aa)) constitute a KARI N-terminal Rossmann domain. Residues 45 to 48 (CGAQ), Arg-68, Arg-76, Ser-78, and 108 to 110 (DKQ) each bind NADP(+). The active site involves His-132. Gly-158 serves as a coordination point for NADP(+). KARI C-terminal knotted domains lie at 209-344 (SFVA…TAPQ) and 345-484 (FEGK…MTDM). Residues Asp-217, Glu-221, Glu-389, and Glu-393 each contribute to the Mg(2+) site. Substrate is bound at residue Ser-414.

The protein belongs to the ketol-acid reductoisomerase family. Mg(2+) serves as cofactor.

It catalyses the reaction (2R)-2,3-dihydroxy-3-methylbutanoate + NADP(+) = (2S)-2-acetolactate + NADPH + H(+). The catalysed reaction is (2R,3R)-2,3-dihydroxy-3-methylpentanoate + NADP(+) = (S)-2-ethyl-2-hydroxy-3-oxobutanoate + NADPH + H(+). The protein operates within amino-acid biosynthesis; L-isoleucine biosynthesis; L-isoleucine from 2-oxobutanoate: step 2/4. Its pathway is amino-acid biosynthesis; L-valine biosynthesis; L-valine from pyruvate: step 2/4. Functionally, involved in the biosynthesis of branched-chain amino acids (BCAA). Catalyzes an alkyl-migration followed by a ketol-acid reduction of (S)-2-acetolactate (S2AL) to yield (R)-2,3-dihydroxy-isovalerate. In the isomerase reaction, S2AL is rearranged via a Mg-dependent methyl migration to produce 3-hydroxy-3-methyl-2-ketobutyrate (HMKB). In the reductase reaction, this 2-ketoacid undergoes a metal-dependent reduction by NADPH to yield (R)-2,3-dihydroxy-isovalerate. This chain is Ketol-acid reductoisomerase (NADP(+)), found in Salmonella dublin (strain CT_02021853).